A 227-amino-acid chain; its full sequence is Glutathione S-transferase U7 (227 aa).

In terms of domain architecture, GST N-terminal spans 8–87; sequence EEVKLLGMWA…YIDETWRDNP (80 aa). Glutathione is bound by residues 18–19, 44–45, 58–59, and 71–72; these read SP, NK, MI, and ES. One can recognise a GST C-terminal domain in the interval 92–215; it reads DPYERTMARF…PPEDEHLKYI (124 aa).

It belongs to the GST superfamily. Tau family.

Its subcellular location is the cytoplasm. It is found in the cytosol. It carries out the reaction RX + glutathione = an S-substituted glutathione + a halide anion + H(+). Its function is as follows. May be involved in the conjugation of reduced glutathione to a wide number of exogenous and endogenous hydrophobic electrophiles and have a detoxification role against certain herbicides. This is Glutathione S-transferase U7 (GSTU7) from Arabidopsis thaliana (Mouse-ear cress).